The sequence spans 174 residues: ATP-dependent protease subunit HslV (174 aa).

T2 is an active-site residue. Na(+) is bound by residues G157, C160, and T163.

This sequence belongs to the peptidase T1B family. HslV subfamily. As to quaternary structure, a double ring-shaped homohexamer of HslV is capped on each side by a ring-shaped HslU homohexamer. The assembly of the HslU/HslV complex is dependent on binding of ATP.

It localises to the cytoplasm. It catalyses the reaction ATP-dependent cleavage of peptide bonds with broad specificity.. With respect to regulation, allosterically activated by HslU binding. In terms of biological role, protease subunit of a proteasome-like degradation complex believed to be a general protein degrading machinery. This is ATP-dependent protease subunit HslV from Shewanella sediminis (strain HAW-EB3).